Consider the following 468-residue polypeptide: MRAPGERWRPAGAALWLLLLLLLLGATESVRRAQPLRRYTPDWPSLDSRPLPSWFDEAKFGVFIHWGVFSVPAWGSEWFWWNWQGEGRPQYQRFMRDNYPPGSSYADFGPQFTARFFHPEEWADLFQAAGAKYVVLTTKHHEGFTNWPSPVSWNWNSKDVGPHRDLVGELGTALRKRNIRYGLYHSLLEWFHPLYLLDKKNGFKTQYFVGAKTMPELYDLVNSYKPDLIWSDGEWECPDTYWNSTNFLSWLYNDSPVKDEVVVNDRWGQNCSCHHGGYYNCEDKFKPQSLPDHKWEMCTSIDKFSWGYRRDMAMSDVTEESEIISELVQTVSLGGNYLLNIGPTKDGLIVPIFQERLLALGKWLSINGEAIYASKPWRVQWEKNTTSVWYTSKGSAVYAIFLHWPENGVLNLESPITTSTTKIMMLRIQGDLKWSTDPDKGLLISLPQLPPSAVPAEFAWTIKLTGVK.

A signal peptide spans M1–S29. A Phosphothreonine modification is found at T172. 3 N-linked (GlcNAc...) asparagine glycosylation sites follow: N243, N270, and N384.

Belongs to the glycosyl hydrolase 29 family. In terms of assembly, homotetramer.

It localises to the lysosome. The catalysed reaction is an alpha-L-fucoside + H2O = L-fucose + an alcohol. The enzyme catalyses a neolactoside IV(2)-alpha-Fuc-nLc4Cer(d18:1(4E)) + H2O = a neolactoside nLc4Cer(d18:1(4E)) + L-fucose. It catalyses the reaction a neolactoside IV(2)-alpha-Fuc-nLc4Cer(d18:0) + H2O = a neolactoside nLc4Cer(d18:0) + L-fucose. In terms of biological role, alpha-L-fucosidase is responsible for hydrolyzing the alpha-1,6-linked fucose joined to the reducing-end N-acetylglucosamine of the carbohydrate moieties of glycoproteins. The protein is Tissue alpha-L-fucosidase (FUCA1) of Macaca fascicularis (Crab-eating macaque).